The primary structure comprises 369 residues: Phosphoribosyl pyrophosphate synthase-associated protein 2 (369 aa).

Met-1 carries the N-acetylmethionine modification. Residues Ser-219, Ser-227, and Ser-233 each carry the phosphoserine modification.

It belongs to the ribose-phosphate pyrophosphokinase family. As to quaternary structure, binds to PRPS1 and PRPS2.

In terms of biological role, seems to play a negative regulatory role in 5-phosphoribose 1-diphosphate synthesis. This Bos taurus (Bovine) protein is Phosphoribosyl pyrophosphate synthase-associated protein 2 (PRPSAP2).